We begin with the raw amino-acid sequence, 150 residues long: Mediator of RNA polymerase II transcription subunit 22a (150 aa).

Residues serine 99–aspartate 127 are a coiled coil.

This sequence belongs to the Mediator complex subunit 22 family. In terms of assembly, component of the Mediator complex.

The protein localises to the nucleus. In terms of biological role, component of the Mediator complex, a coactivator involved in the regulated transcription of nearly all RNA polymerase II-dependent genes. Mediator functions as a bridge to convey information from gene-specific regulatory proteins to the basal RNA polymerase II transcription machinery. The Mediator complex, having a compact conformation in its free form, is recruited to promoters by direct interactions with regulatory proteins and serves for the assembly of a functional preinitiation complex with RNA polymerase II and the general transcription factors. In Arabidopsis thaliana (Mouse-ear cress), this protein is Mediator of RNA polymerase II transcription subunit 22a (MED22A).